We begin with the raw amino-acid sequence, 440 residues long: MRPCQTLVHAALIVTQDKERRILENASMAVTDGIVADLGPRHEMITCWQPRHEADFGRCLLLPGLVNAHTHSAMTFLRGLADDMPLMDWLNKRIFPVEQKLTPEIVRLGSLMGYAEMLRTGTTACVDMYIFEKEAMAAADQAGLRCLGGEVVFAFPSAAFPGPEAALEETRALAQKYAGHPRLSIAVNPHSVYTTTPEILAACRDLARELALPLHMHLAETAEETQICLHAHGKRPVACCRSLELLDGPCTLAHVVDVTPDELDFLAQRGAVAVHNISSNMKLASGASPVPAMLERGMPVALGTDGAASNNRLNMFTEMGRAALLHKLTGMDPTLLPAQTVLDMATLGGAAAMHDNRLGSLAVGKAADCVALDLAAPNMQPLYNAVSHLVYAATGMENRMTMIAGEIVYEDGKFTRFDYDALCREMTSIRDFVRRQAGLA.

The Zn(2+) site is built by histidine 69 and histidine 71. Substrate is bound by residues glutamate 98 and histidine 190. Residue histidine 217 coordinates Zn(2+). Substrate-binding residues include glutamate 220 and aspartate 305. Aspartate 305 contributes to the Zn(2+) binding site.

It belongs to the metallo-dependent hydrolases superfamily. MTA/SAH deaminase family. The cofactor is Zn(2+).

It catalyses the reaction S-adenosyl-L-homocysteine + H2O + H(+) = S-inosyl-L-homocysteine + NH4(+). It carries out the reaction S-methyl-5'-thioadenosine + H2O + H(+) = S-methyl-5'-thioinosine + NH4(+). In terms of biological role, catalyzes the deamination of 5-methylthioadenosine and S-adenosyl-L-homocysteine into 5-methylthioinosine and S-inosyl-L-homocysteine, respectively. Is also able to deaminate adenosine. This Desulfovibrio desulfuricans (strain ATCC 27774 / DSM 6949 / MB) protein is 5-methylthioadenosine/S-adenosylhomocysteine deaminase.